The primary structure comprises 115 residues: MGTSLLCWVVLGFLGTDHTGAGVSQSPRYKVTKRGQDVTLRCDPISSHATLYWYQQALGQGPEFLTYFNYEAQPDKSGLPSDRFSAERPEGSISTLTIQRTEQRDSAMYRCASSL.

The N-terminal stretch at 1 to 21 (MGTSLLCWVVLGFLGTDHTGA) is a signal peptide. One can recognise an Ig-like domain in the interval 22-115 (GVSQSPRYKV…SAMYRCASSL (94 aa)). An intrachain disulfide couples cysteine 42 to cysteine 111.

Alpha-beta TR is a heterodimer composed of an alpha and beta chain; disulfide-linked. The alpha-beta TR is associated with the transmembrane signaling CD3 coreceptor proteins to form the TR-CD3 (TcR or TCR). The assembly of alpha-beta TR heterodimers with CD3 occurs in the endoplasmic reticulum where a single alpha-beta TR heterodimer associates with one CD3D-CD3E heterodimer, one CD3G-CD3E heterodimer and one CD247 homodimer forming a stable octameric structure. CD3D-CD3E and CD3G-CD3E heterodimers preferentially associate with TR alpha and TR beta chains, respectively. The association of the CD247 homodimer is the last step of TcR assembly in the endoplasmic reticulum and is required for transport to the cell surface.

Its subcellular location is the cell membrane. In terms of biological role, v region of the variable domain of T cell receptor (TR) beta chain that participates in the antigen recognition. Alpha-beta T cell receptors are antigen specific receptors which are essential to the immune response and are present on the cell surface of T lymphocytes. Recognize peptide-major histocompatibility (MH) (pMH) complexes that are displayed by antigen presenting cells (APC), a prerequisite for efficient T cell adaptive immunity against pathogens. Binding of alpha-beta TR to pMH complex initiates TR-CD3 clustering on the cell surface and intracellular activation of LCK that phosphorylates the ITAM motifs of CD3G, CD3D, CD3E and CD247 enabling the recruitment of ZAP70. In turn ZAP70 phosphorylates LAT, which recruits numerous signaling molecules to form the LAT signalosome. The LAT signalosome propagates signal branching to three major signaling pathways, the calcium, the mitogen-activated protein kinase (MAPK) kinase and the nuclear factor NF-kappa-B (NF-kB) pathways, leading to the mobilization of transcription factors that are critical for gene expression and essential for T cell growth and differentiation. The T cell repertoire is generated in the thymus, by V-(D)-J rearrangement. This repertoire is then shaped by intrathymic selection events to generate a peripheral T cell pool of self-MH restricted, non-autoaggressive T cells. Post-thymic interaction of alpha-beta TR with the pMH complexes shapes TR structural and functional avidity. This chain is T cell receptor beta variable 7-7, found in Homo sapiens (Human).